A 287-amino-acid polypeptide reads, in one-letter code: 4-hydroxybenzoate octaprenyltransferase (287 aa).

The next 6 membrane-spanning stretches (helical) occupy residues A30–G50, W89–L109, F133–F153, G158–Y178, A199–Y221, and N267–F287.

Belongs to the UbiA prenyltransferase family. Mg(2+) serves as cofactor.

It localises to the cell inner membrane. The catalysed reaction is all-trans-octaprenyl diphosphate + 4-hydroxybenzoate = 4-hydroxy-3-(all-trans-octaprenyl)benzoate + diphosphate. The protein operates within cofactor biosynthesis; ubiquinone biosynthesis. Its function is as follows. Catalyzes the prenylation of para-hydroxybenzoate (PHB) with an all-trans polyprenyl group. Mediates the second step in the final reaction sequence of ubiquinone-8 (UQ-8) biosynthesis, which is the condensation of the polyisoprenoid side chain with PHB, generating the first membrane-bound Q intermediate 3-octaprenyl-4-hydroxybenzoate. This chain is 4-hydroxybenzoate octaprenyltransferase, found in Paraburkholderia phytofirmans (strain DSM 17436 / LMG 22146 / PsJN) (Burkholderia phytofirmans).